We begin with the raw amino-acid sequence, 120 residues long: MKKQRKNKINRARNLAMFLVFGGMLVMYGGLLLKQFEIIMVILMLVGFVMVLASTALYFLIGLTSTKAAVVTCPNCGKETKVLGRVDLCMHCDEPLTMDRNLEGKEFDEKYNKHSKRAPR.

2 consecutive transmembrane segments (helical) span residues 16-36 (AMFL…LKQF) and 41-61 (VILM…YFLI).

Belongs to the UPF0295 family.

It is found in the cell membrane. The chain is UPF0295 protein Exig_0660 from Exiguobacterium sibiricum (strain DSM 17290 / CCUG 55495 / CIP 109462 / JCM 13490 / 255-15).